A 243-amino-acid chain; its full sequence is 4-hydroxy-tetrahydrodipicolinate reductase (243 aa).

NAD(+)-binding positions include 9–14, 78–80, and 104–107; these read GANGKM, GTS, and APNF. The Proton donor/acceptor role is filled by His-134. Position 135 (His-135) interacts with (S)-2,3,4,5-tetrahydrodipicolinate. The active-site Proton donor is Lys-138. Residue 144–145 coordinates (S)-2,3,4,5-tetrahydrodipicolinate; the sequence is GT.

It belongs to the DapB family.

The protein resides in the cytoplasm. It carries out the reaction (S)-2,3,4,5-tetrahydrodipicolinate + NAD(+) + H2O = (2S,4S)-4-hydroxy-2,3,4,5-tetrahydrodipicolinate + NADH + H(+). The catalysed reaction is (S)-2,3,4,5-tetrahydrodipicolinate + NADP(+) + H2O = (2S,4S)-4-hydroxy-2,3,4,5-tetrahydrodipicolinate + NADPH + H(+). Its pathway is amino-acid biosynthesis; L-lysine biosynthesis via DAP pathway; (S)-tetrahydrodipicolinate from L-aspartate: step 4/4. Catalyzes the conversion of 4-hydroxy-tetrahydrodipicolinate (HTPA) to tetrahydrodipicolinate. This chain is 4-hydroxy-tetrahydrodipicolinate reductase, found in Legionella pneumophila subsp. pneumophila (strain Philadelphia 1 / ATCC 33152 / DSM 7513).